Reading from the N-terminus, the 292-residue chain is ATP synthase gamma chain (292 aa).

Belongs to the ATPase gamma chain family. In terms of assembly, F-type ATPases have 2 components, CF(1) - the catalytic core - and CF(0) - the membrane proton channel. CF(1) has five subunits: alpha(3), beta(3), gamma(1), delta(1), epsilon(1). CF(0) has three main subunits: a, b and c.

The protein localises to the cell membrane. In terms of biological role, produces ATP from ADP in the presence of a proton gradient across the membrane. The gamma chain is believed to be important in regulating ATPase activity and the flow of protons through the CF(0) complex. This chain is ATP synthase gamma chain, found in Streptococcus pneumoniae (strain JJA).